A 96-amino-acid polypeptide reads, in one-letter code: UPF0235 protein YggU (96 aa).

Belongs to the UPF0235 family.

This chain is UPF0235 protein YggU, found in Salmonella typhimurium (strain LT2 / SGSC1412 / ATCC 700720).